Reading from the N-terminus, the 440-residue chain is Asparagine--tRNA ligase (440 aa).

The protein belongs to the class-II aminoacyl-tRNA synthetase family. Homodimer.

Its subcellular location is the cytoplasm. The catalysed reaction is tRNA(Asn) + L-asparagine + ATP = L-asparaginyl-tRNA(Asn) + AMP + diphosphate + H(+). In Roseiflexus castenholzii (strain DSM 13941 / HLO8), this protein is Asparagine--tRNA ligase.